We begin with the raw amino-acid sequence, 513 residues long: Calcium-binding mitochondrial carrier protein SCaMC-2 (513 aa).

Residues 1–233 (MARPRSLVSP…EKQTGMWWRH (233 aa)) lie on the Mitochondrial intermembrane side of the membrane. EF-hand domains are found at residues 55 to 90 (EHETRLQILFQELDVNKDGGICINDLAVGLKRLGVH), 91 to 124 (RTELELRKIVKAGDKDQDGQLDFEEFVHYLRDHE), 122 to 157 (DHEKKLRLVFKSLDKKNDGRIDAQEIMQSLRDLGVN), and 158 to 193 (ISEQQAEKILKSMDKNGTMTIDWNEWRDYHLLHPAE). Ca(2+) contacts are provided by Asp68, Asn70, Asp72, Asp79, Asp104, Asp106, Asp108, Gln110, and Glu115. Solcar repeat units lie at residues 228 to 314 (GMWW…MKRI), 322 to 407 (LGIH…LKNA), and 419 to 507 (PGVF…LKLT). The chain crosses the membrane as a helical span at residues 234 to 251 (LVAGGGAGAVSRTCTAPL). Over 252–288 (DRLKVLMQVHASRSNNMSMLGGFTQMIREGGIRSLWR) the chain is Mitochondrial matrix. A helical membrane pass occupies residues 289-308 (GNGINVIKIAPESAIKFMAY). At 309–331 (EQMKRIIGSDQETLGIHERLVAG) the chain is on the mitochondrial intermembrane side. A helical membrane pass occupies residues 332 to 345 (SLAGVIAQSSIYPM). Residues 346-381 (EVLKTRMALRKTGQYQGMLDCGKKILLKEGVSAFYK) lie on the Mitochondrial matrix side of the membrane. The helical transmembrane segment at 382 to 401 (GYVPNMLGIIPYAGIDLAVY) threads the bilayer. The Mitochondrial intermembrane segment spans residues 402–424 (ETLKNAWLQRYATSSADPGVFVL). Residues 425 to 442 (LACGTISSTCGQLASYPL) form a helical membrane-spanning segment. Residues 443-481 (ALVRTRMQAEASVEGAPQMTMSKLFKHIVKTEGAFGLYR) lie on the Mitochondrial matrix side of the membrane. A helical transmembrane segment spans residues 482 to 501 (GLAPNFMKVIPAVSISYVVY). At 502–513 (ENLKLTLGVQSR) the chain is on the mitochondrial intermembrane side.

It belongs to the mitochondrial carrier (TC 2.A.29) family.

The protein resides in the mitochondrion inner membrane. Functionally, calcium-dependent mitochondrial solute carrier. In Xenopus tropicalis (Western clawed frog), this protein is Calcium-binding mitochondrial carrier protein SCaMC-2 (slc25a25).